Here is a 68-residue protein sequence, read N- to C-terminus: Putative membrane protein insertion efficiency factor (68 aa).

Belongs to the UPF0161 family.

The protein localises to the cell membrane. Functionally, could be involved in insertion of integral membrane proteins into the membrane. This chain is Putative membrane protein insertion efficiency factor, found in Syntrophomonas wolfei subsp. wolfei (strain DSM 2245B / Goettingen).